A 315-amino-acid chain; its full sequence is Energy-coupling factor transporter ATP-binding protein EcfA2 (315 aa).

The ABC transporter domain maps to 31-275; it reads IILDNVSYTY…QELLSKIQIE (245 aa). 68–75 provides a ligand contact to ATP; it reads GTTGSGKS.

This sequence belongs to the ABC transporter superfamily. Energy-coupling factor EcfA family. In terms of assembly, forms a stable energy-coupling factor (ECF) transporter complex composed of 2 membrane-embedded substrate-binding proteins (S component), 2 ATP-binding proteins (A component) and 2 transmembrane proteins (T component).

The protein localises to the cell membrane. ATP-binding (A) component of a common energy-coupling factor (ECF) ABC-transporter complex. Unlike classic ABC transporters this ECF transporter provides the energy necessary to transport a number of different substrates. This Mesoplasma florum (strain ATCC 33453 / NBRC 100688 / NCTC 11704 / L1) (Acholeplasma florum) protein is Energy-coupling factor transporter ATP-binding protein EcfA2.